Here is a 442-residue protein sequence, read N- to C-terminus: MLNSIHRSFHLTSRHQIVLRLCSPSASRTIMSSSPHSPIPKTHTASLDSLNDYEEQFPPLTGGSKTKKFYLGSTNPSTPCQSSQLQNWTSGKDALSLQRNLGCKNRRRRRASRFLHEESNGTTFEVGAGIGSPTSMVHFDSTNPSSSSKSSQSQNLKIRKVRNHRNSGFKSRDQSPQRIKDPPPFDICSSVLERNDTSIKDWILADETNRETVEVSNKHKVIRPGMVLLKDFLTPDIQVDIVKTCRELGVKPTGFYQPGYSVGSKLHLQMMCLGRNWDPQTKYRKNTDIDSKAPEIPVTFNVLVEKAIREAHALIDRESGTEDAERILPVMSPDICIVNFYSETGRLGLHQDRDESEESIARGLPIVSFSIGDSAEFLYGEKRDVEEAQGVILESGDVLIFGGESRMIFHGVKSIIPNSAPMSLLNESKLRTGRLNLTFRHF.

The segment covering Ser135 to Pro144 has biased composition (polar residues). The interval Ser135–Phe185 is disordered. Over residues Ser145–Gln154 the composition is skewed to low complexity. Positions Lys157–Ser167 are enriched in basic residues. A compositionally biased stretch (basic and acidic residues) spans Lys170–Pro183. The Fe2OG dioxygenase domain maps to Ser332–Phe442. A 2-oxoglutarate-binding site is contributed by Asn339–Tyr341. Residues His350, Asp352, and His410 each coordinate Fe cation. Position 434-440 (Arg434–Arg440) interacts with 2-oxoglutarate.

This sequence belongs to the alkB family. Requires Fe(2+) as cofactor. In terms of tissue distribution, expressed at low levels in roots, seedlings and rosette leaves, but barely in cauline leaves, stems, siliques and flowers.

The protein resides in the nucleus. It localises to the cytoplasm. The enzyme catalyses an N(6)-methyl-2'-deoxyadenosine in DNA + 2-oxoglutarate + O2 = a 2'-deoxyadenosine in DNA + formaldehyde + succinate + CO2. In terms of biological role, dioxygenase that catalyzes DNA N(6)-methyladenine (6 mA) demethylation to modulate gene expression and regulate seed germination. The protein is DNA N(6)-methyladenine demethylase ALKBH1D of Arabidopsis thaliana (Mouse-ear cress).